The following is a 315-amino-acid chain: 2-oxoglutarate and iron-dependent oxygenase domain-containing protein 3 (315 aa).

Residues 1-32 form a disordered region; sequence MAPQRRGPPRVPEGNSAAERRHANSTKKDRLP. Topologically, residues 1-41 are cytoplasmic; sequence MAPQRRGPPRVPEGNSAAERRHANSTKKDRLPQEAQRTWLR. A compositionally biased stretch (basic and acidic residues) spans 18-32; that stretch reads AERRHANSTKKDRLP. The chain crosses the membrane as a helical; Signal-anchor for type II membrane protein span at residues 42–62; that stretch reads IVALGVSLALVTFLLWSSAGI. Topologically, residues 63 to 315 are lumenal; the sequence is DDDVAEVVAH…DHGIEDPVLT (253 aa). One can recognise a Fe2OG dioxygenase domain in the interval 203-305; it reads KPTFFSRINS…AITIAFTCNP (103 aa). The N-linked (GlcNAc...) asparagine glycan is linked to asparagine 211. Fe cation contacts are provided by histidine 226 and aspartate 228. Asparagine 263 carries an N-linked (GlcNAc...) asparagine glycan. Histidine 284 is a Fe cation binding site. Residue arginine 294 is part of the active site. Arginine 294 contacts 2-oxoglutarate.

Belongs to the OGFOD3 family. Fe(2+) is required as a cofactor. The cofactor is L-ascorbate.

It localises to the membrane. This chain is 2-oxoglutarate and iron-dependent oxygenase domain-containing protein 3 (Ogfod3), found in Rattus norvegicus (Rat).